The following is a 493-amino-acid chain: Glutamate--tRNA ligase (493 aa).

Residues 10–20 (PSPTGDPHVGT) carry the 'HIGH' region motif. A 'KMSKS' region motif is present at residues 251–255 (KLSKR). Lysine 254 contacts ATP.

Belongs to the class-I aminoacyl-tRNA synthetase family. Glutamate--tRNA ligase type 1 subfamily. Monomer.

It localises to the cytoplasm. The enzyme catalyses tRNA(Glu) + L-glutamate + ATP = L-glutamyl-tRNA(Glu) + AMP + diphosphate. Its function is as follows. Catalyzes the attachment of glutamate to tRNA(Glu) in a two-step reaction: glutamate is first activated by ATP to form Glu-AMP and then transferred to the acceptor end of tRNA(Glu). The chain is Glutamate--tRNA ligase from Pseudomonas entomophila (strain L48).